The following is a 571-amino-acid chain: Proline--tRNA ligase (571 aa).

It belongs to the class-II aminoacyl-tRNA synthetase family. ProS type 1 subfamily. In terms of assembly, homodimer.

It localises to the cytoplasm. The enzyme catalyses tRNA(Pro) + L-proline + ATP = L-prolyl-tRNA(Pro) + AMP + diphosphate. Functionally, catalyzes the attachment of proline to tRNA(Pro) in a two-step reaction: proline is first activated by ATP to form Pro-AMP and then transferred to the acceptor end of tRNA(Pro). As ProRS can inadvertently accommodate and process non-cognate amino acids such as alanine and cysteine, to avoid such errors it has two additional distinct editing activities against alanine. One activity is designated as 'pretransfer' editing and involves the tRNA(Pro)-independent hydrolysis of activated Ala-AMP. The other activity is designated 'posttransfer' editing and involves deacylation of mischarged Ala-tRNA(Pro). The misacylated Cys-tRNA(Pro) is not edited by ProRS. In Psychromonas ingrahamii (strain DSM 17664 / CCUG 51855 / 37), this protein is Proline--tRNA ligase.